Reading from the N-terminus, the 49-residue chain is Large ribosomal subunit protein bL33B (49 aa).

The protein belongs to the bacterial ribosomal protein bL33 family.

This Shouchella clausii (strain KSM-K16) (Alkalihalobacillus clausii) protein is Large ribosomal subunit protein bL33B.